The following is a 423-amino-acid chain: L-cysteine:1D-myo-inositol 2-amino-2-deoxy-alpha-D-glucopyranoside ligase (423 aa).

Cys-45 is a Zn(2+) binding site. L-cysteinyl-5'-AMP-binding positions include 45–48 (CGIT), Thr-60, and 83–85 (NVT). The short motif at 47–57 (ITPYDATHIGH) is the 'HIGH' region element. The 'ERGGDP' region motif lies at 197-202 (DRGGDP). Residue Trp-238 coordinates L-cysteinyl-5'-AMP. Cys-242 is a Zn(2+) binding site. Residue 260 to 262 (GSD) coordinates L-cysteinyl-5'-AMP. His-267 serves as a coordination point for Zn(2+). L-cysteinyl-5'-AMP is bound at residue Ile-294. The 'KMSKS' region motif lies at 300-304 (KMSKS).

Belongs to the class-I aminoacyl-tRNA synthetase family. MshC subfamily. As to quaternary structure, monomer. Requires Zn(2+) as cofactor.

It catalyses the reaction 1D-myo-inositol 2-amino-2-deoxy-alpha-D-glucopyranoside + L-cysteine + ATP = 1D-myo-inositol 2-(L-cysteinylamino)-2-deoxy-alpha-D-glucopyranoside + AMP + diphosphate + H(+). In terms of biological role, catalyzes the ATP-dependent condensation of GlcN-Ins and L-cysteine to form L-Cys-GlcN-Ins. The protein is L-cysteine:1D-myo-inositol 2-amino-2-deoxy-alpha-D-glucopyranoside ligase of Jonesia denitrificans (strain ATCC 14870 / DSM 20603 / BCRC 15368 / CIP 55.134 / JCM 11481 / NBRC 15587 / NCTC 10816 / Prevot 55134) (Listeria denitrificans).